The primary structure comprises 79 residues: Acyl carrier protein (79 aa).

The Carrier domain occupies 2-77; sequence SDIGERVKKI…DATKFLEKNA (76 aa). Position 37 is an O-(pantetheine 4'-phosphoryl)serine (Ser37).

Belongs to the acyl carrier protein (ACP) family. 4'-phosphopantetheine is transferred from CoA to a specific serine of apo-ACP by AcpS. This modification is essential for activity because fatty acids are bound in thioester linkage to the sulfhydryl of the prosthetic group.

The protein localises to the cytoplasm. Its pathway is lipid metabolism; fatty acid biosynthesis. Functionally, carrier of the growing fatty acid chain in fatty acid biosynthesis. The polypeptide is Acyl carrier protein (Bradyrhizobium diazoefficiens (strain JCM 10833 / BCRC 13528 / IAM 13628 / NBRC 14792 / USDA 110)).